The primary structure comprises 113 residues: MELPPQIQAQLMQLQQLQQQLQMILMQKQSVETELKECKKALEELEKSSSDEVYKLVGGLFVKRKKEDVKKELEEKVETLELRVKTLEKQEEKLQSRLKELQEKIQKMIPTAQ.

It belongs to the prefoldin subunit beta family. Heterohexamer of two alpha and four beta subunits.

The protein localises to the cytoplasm. Functionally, molecular chaperone capable of stabilizing a range of proteins. Seems to fulfill an ATP-independent, HSP70-like function in archaeal de novo protein folding. The polypeptide is Prefoldin subunit beta (pfdB) (Methanocaldococcus jannaschii (strain ATCC 43067 / DSM 2661 / JAL-1 / JCM 10045 / NBRC 100440) (Methanococcus jannaschii)).